We begin with the raw amino-acid sequence, 445 residues long: tRNA-2-methylthio-N(6)-dimethylallyladenosine synthase (445 aa).

One can recognise an MTTase N-terminal domain in the interval 3 to 124; sequence KNLYIKTYGC…LPELISKIVR (122 aa). Positions 12, 48, 87, 162, 166, and 169 each coordinate [4Fe-4S] cluster. The region spanning 148–380 is the Radical SAM core domain; that stretch reads YPQGASSFIS…QKELMDQQLA (233 aa). The TRAM domain maps to 383-445; sequence ESCVGSTIKV…SLNSLTGEIL (63 aa).

It belongs to the methylthiotransferase family. MiaB subfamily. Monomer. It depends on [4Fe-4S] cluster as a cofactor.

It is found in the cytoplasm. The catalysed reaction is N(6)-dimethylallyladenosine(37) in tRNA + (sulfur carrier)-SH + AH2 + 2 S-adenosyl-L-methionine = 2-methylsulfanyl-N(6)-dimethylallyladenosine(37) in tRNA + (sulfur carrier)-H + 5'-deoxyadenosine + L-methionine + A + S-adenosyl-L-homocysteine + 2 H(+). In terms of biological role, catalyzes the methylthiolation of N6-(dimethylallyl)adenosine (i(6)A), leading to the formation of 2-methylthio-N6-(dimethylallyl)adenosine (ms(2)i(6)A) at position 37 in tRNAs that read codons beginning with uridine. The sequence is that of tRNA-2-methylthio-N(6)-dimethylallyladenosine synthase from Rickettsia akari (strain Hartford).